Here is a 257-residue protein sequence, read N- to C-terminus: MLTLYGTELSSRLLLGTARYPSPAILAEAVRRSKTEIVTVSLRRETAGGKAGGAFFELIRDLGVRVLPNTAGCHSVKEAALTAKMAREVFRTNWIKLELIGHQDTLQPDVFQLVEAARILTEDGFEVFPYTTEDLVVGEHLLGAGCKVLMPWCAPIGSAMGPQNIPGLRAMRAEFPDLPLIVDAGIGRPSHAATVMELGFDAVLLNTAVASAADPAAMAEAFANAIDAGHGGYLAGLLEPRDMAVPSTPVIGKGVFA.

The Schiff-base intermediate with DXP role is filled by Lys-96. 1-deoxy-D-xylulose 5-phosphate is bound by residues Gly-157, 184 to 185, and 206 to 207; these read AG and NT.

Belongs to the ThiG family. As to quaternary structure, homotetramer. Forms heterodimers with either ThiH or ThiS.

The protein localises to the cytoplasm. The enzyme catalyses [ThiS sulfur-carrier protein]-C-terminal-Gly-aminoethanethioate + 2-iminoacetate + 1-deoxy-D-xylulose 5-phosphate = [ThiS sulfur-carrier protein]-C-terminal Gly-Gly + 2-[(2R,5Z)-2-carboxy-4-methylthiazol-5(2H)-ylidene]ethyl phosphate + 2 H2O + H(+). It functions in the pathway cofactor biosynthesis; thiamine diphosphate biosynthesis. Functionally, catalyzes the rearrangement of 1-deoxy-D-xylulose 5-phosphate (DXP) to produce the thiazole phosphate moiety of thiamine. Sulfur is provided by the thiocarboxylate moiety of the carrier protein ThiS. In vitro, sulfur can be provided by H(2)S. The protein is Thiazole synthase of Allorhizobium ampelinum (strain ATCC BAA-846 / DSM 112012 / S4) (Agrobacterium vitis (strain S4)).